Consider the following 321-residue polypeptide: Flagellin C (321 aa).

Belongs to the bacterial flagellin family.

The protein localises to the secreted. Its subcellular location is the bacterial flagellum. Its function is as follows. Flagellin is the subunit protein which polymerizes to form the filaments of bacterial flagella. The protein is Flagellin C (flaC) of Rhizobium meliloti (strain 1021) (Ensifer meliloti).